The following is a 140-amino-acid chain: L-fucose mutarotase (140 aa).

The active-site Proton donor is the His22. Residues Asp30, Arg107, and 129-131 contribute to the substrate site; that span reads YGN.

This sequence belongs to the RbsD / FucU family. FucU mutarotase subfamily. As to quaternary structure, homodecamer.

The protein localises to the cytoplasm. It carries out the reaction alpha-L-fucose = beta-L-fucose. Its pathway is carbohydrate metabolism; L-fucose metabolism. In terms of biological role, involved in the anomeric conversion of L-fucose. The chain is L-fucose mutarotase from Salmonella arizonae (strain ATCC BAA-731 / CDC346-86 / RSK2980).